We begin with the raw amino-acid sequence, 183 residues long: ATP synthase subunit delta (183 aa).

Belongs to the ATPase delta chain family. As to quaternary structure, F-type ATPases have 2 components, F(1) - the catalytic core - and F(0) - the membrane proton channel. F(1) has five subunits: alpha(3), beta(3), gamma(1), delta(1), epsilon(1). F(0) has three main subunits: a(1), b(2) and c(10-14). The alpha and beta chains form an alternating ring which encloses part of the gamma chain. F(1) is attached to F(0) by a central stalk formed by the gamma and epsilon chains, while a peripheral stalk is formed by the delta and b chains.

It localises to the cell inner membrane. Its function is as follows. F(1)F(0) ATP synthase produces ATP from ADP in the presence of a proton or sodium gradient. F-type ATPases consist of two structural domains, F(1) containing the extramembraneous catalytic core and F(0) containing the membrane proton channel, linked together by a central stalk and a peripheral stalk. During catalysis, ATP synthesis in the catalytic domain of F(1) is coupled via a rotary mechanism of the central stalk subunits to proton translocation. Functionally, this protein is part of the stalk that links CF(0) to CF(1). It either transmits conformational changes from CF(0) to CF(1) or is implicated in proton conduction. This Thermosipho africanus (strain TCF52B) protein is ATP synthase subunit delta.